We begin with the raw amino-acid sequence, 413 residues long: Paxillin homolog 1 (413 aa).

A compositionally biased stretch (basic and acidic residues) spans 33–45; sequence HISDRRSQSRDDF. The disordered stretch occupies residues 33–157; sequence HISDRRSQSR…PLHSDSMIGT (125 aa). A compositionally biased stretch (polar residues) spans 49–69; the sequence is YDLQGNLNTQSVSNGNITTSP. A compositionally biased stretch (basic and acidic residues) spans 73–92; sequence RSSEGKDYSKSQERIYENES. Over residues 118–143 the composition is skewed to polar residues; it reads ASSSRKSLGPPSQAQSYSDVRSNGRS. LIM zinc-binding domains lie at 174–232, 233–292, 293–350, and 351–410; these read GDCA…NQFS, PKCQ…LFAP, KCNG…ESRG, and SICS…TYAL.

This sequence belongs to the paxillin family. Isoform a: Expressed in all 95 body wall muscle cells as well as in the pharyngeal muscle cells (at protein level). Isoform c: Expressed in the body wall muscle cells and in the pharyngeal muscle cells.

Its subcellular location is the cell junction. It localises to the adherens junction. It is found in the cell membrane. The protein resides in the cytoplasm. The protein localises to the myofibril. Its subcellular location is the sarcomere. It localises to the m line. It is found in the cell projection. The protein resides in the podosome. Functionally, required for myofilament organization of the pharyngeal sarcomeres and for pharyngeal muscle contractions and hence for pharyngeal pumping. Together with lin-8, might be required for myofilament organization in the body wall muscles. The chain is Paxillin homolog 1 (pxl-1) from Caenorhabditis elegans.